A 220-amino-acid polypeptide reads, in one-letter code: Protein-L-isoaspartate O-methyltransferase (220 aa).

The active site involves Ser-65.

The protein belongs to the methyltransferase superfamily. L-isoaspartyl/D-aspartyl protein methyltransferase family.

Its subcellular location is the cytoplasm. The catalysed reaction is [protein]-L-isoaspartate + S-adenosyl-L-methionine = [protein]-L-isoaspartate alpha-methyl ester + S-adenosyl-L-homocysteine. Functionally, catalyzes the methyl esterification of L-isoaspartyl residues in peptides and proteins that result from spontaneous decomposition of normal L-aspartyl and L-asparaginyl residues. It plays a role in the repair and/or degradation of damaged proteins. This chain is Protein-L-isoaspartate O-methyltransferase (pcm), found in Pyrococcus horikoshii (strain ATCC 700860 / DSM 12428 / JCM 9974 / NBRC 100139 / OT-3).